The chain runs to 54 residues: Large ribosomal subunit protein bL33 (54 aa).

Belongs to the bacterial ribosomal protein bL33 family.

This Corynebacterium efficiens (strain DSM 44549 / YS-314 / AJ 12310 / JCM 11189 / NBRC 100395) protein is Large ribosomal subunit protein bL33.